Reading from the N-terminus, the 115-residue chain is Large ribosomal subunit protein uL18 (115 aa).

This sequence belongs to the universal ribosomal protein uL18 family. As to quaternary structure, part of the 50S ribosomal subunit; part of the 5S rRNA/L5/L18/L25 subcomplex. Contacts the 5S and 23S rRNAs.

Functionally, this is one of the proteins that bind and probably mediate the attachment of the 5S RNA into the large ribosomal subunit, where it forms part of the central protuberance. The sequence is that of Large ribosomal subunit protein uL18 from Mycoplasma genitalium (strain ATCC 33530 / DSM 19775 / NCTC 10195 / G37) (Mycoplasmoides genitalium).